Consider the following 159-residue polypeptide: Phosphopantetheine adenylyltransferase (159 aa).

Residue Thr-9 participates in substrate binding. ATP contacts are provided by residues 9 to 10 and His-17; that span reads TF. Substrate is bound by residues Lys-41, Leu-73, and Arg-87. ATP contacts are provided by residues 88-90, Glu-98, and 123-129; these read GLR and YSFISST.

It belongs to the bacterial CoaD family. As to quaternary structure, homohexamer. It depends on Mg(2+) as a cofactor.

It localises to the cytoplasm. The catalysed reaction is (R)-4'-phosphopantetheine + ATP + H(+) = 3'-dephospho-CoA + diphosphate. Its pathway is cofactor biosynthesis; coenzyme A biosynthesis; CoA from (R)-pantothenate: step 4/5. In terms of biological role, reversibly transfers an adenylyl group from ATP to 4'-phosphopantetheine, yielding dephospho-CoA (dPCoA) and pyrophosphate. The polypeptide is Phosphopantetheine adenylyltransferase (Pseudomonas aeruginosa (strain LESB58)).